We begin with the raw amino-acid sequence, 567 residues long: Proline--tRNA ligase (567 aa).

It belongs to the class-II aminoacyl-tRNA synthetase family. ProS type 1 subfamily. Homodimer.

Its subcellular location is the cytoplasm. It carries out the reaction tRNA(Pro) + L-proline + ATP = L-prolyl-tRNA(Pro) + AMP + diphosphate. Functionally, catalyzes the attachment of proline to tRNA(Pro) in a two-step reaction: proline is first activated by ATP to form Pro-AMP and then transferred to the acceptor end of tRNA(Pro). As ProRS can inadvertently accommodate and process non-cognate amino acids such as alanine and cysteine, to avoid such errors it has two additional distinct editing activities against alanine. One activity is designated as 'pretransfer' editing and involves the tRNA(Pro)-independent hydrolysis of activated Ala-AMP. The other activity is designated 'posttransfer' editing and involves deacylation of mischarged Ala-tRNA(Pro). The misacylated Cys-tRNA(Pro) is not edited by ProRS. This is Proline--tRNA ligase from Campylobacter fetus subsp. fetus (strain 82-40).